The chain runs to 135 residues: Photosystem II extrinsic protein U (135 aa).

The first 29 residues, Met1 to Ala29, serve as a signal peptide directing secretion.

Belongs to the PsbU family. As to quaternary structure, PSII is composed of 1 copy each of membrane proteins PsbA, PsbB, PsbC, PsbD, PsbE, PsbF, PsbH, PsbI, PsbJ, PsbK, PsbL, PsbM, PsbT, PsbX, PsbY, Psb30/Ycf12, peripheral proteins PsbO, CyanoQ (PsbQ), PsbU, PsbV and a large number of cofactors. It forms dimeric complexes.

The protein localises to the cellular thylakoid membrane. Its function is as follows. One of the extrinsic, lumenal subunits of photosystem II (PSII). PSII is a light-driven water plastoquinone oxidoreductase, using light energy to abstract electrons from H(2)O, generating a proton gradient subsequently used for ATP formation. The extrinsic proteins stabilize the structure of photosystem II oxygen-evolving complex (OEC), the ion environment of oxygen evolution and protect the OEC against heat-induced inactivation. This is Photosystem II extrinsic protein U from Parasynechococcus marenigrum (strain WH8102).